The sequence spans 30 residues: Cyclotide cter-Q (30 aa).

Positions 1–30 form a cross-link, cyclopeptide (Gly-Asn); the sequence is GIPCGESCVFIPCISTVIGCSCKNKVCYRN. Disulfide bonds link Cys-4-Cys-20, Cys-8-Cys-22, and Cys-13-Cys-27.

In terms of processing, this is a cyclic peptide.

The protein resides in the secreted. Functionally, probably participates in a plant defense mechanism. The protein is Cyclotide cter-Q of Clitoria ternatea (Butterfly pea).